Reading from the N-terminus, the 509-residue chain is Maturase K (509 aa).

Belongs to the intron maturase 2 family. MatK subfamily.

The protein resides in the plastid. It is found in the chloroplast. Functionally, usually encoded in the trnK tRNA gene intron. Probably assists in splicing its own and other chloroplast group II introns. The polypeptide is Maturase K (Pereskia aculeata (Barbados gooseberry)).